The sequence spans 158 residues: Succinate dehydrogenase assembly factor 2, mitochondrial (158 aa).

The transit peptide at 1–17 (MFSANIARKVVCSVCRA) directs the protein to the mitochondrion.

Belongs to the SDHAF2 family. Interacts with sdha within the SDH catalytic dimer.

The protein resides in the mitochondrion matrix. In terms of biological role, plays an essential role in the assembly of succinate dehydrogenase (SDH), an enzyme complex (also referred to as respiratory complex II) that is a component of both the tricarboxylic acid (TCA) cycle and the mitochondrial electron transport chain, and which couples the oxidation of succinate to fumarate with the reduction of ubiquinone (coenzyme Q) to ubiquinol. Required for flavinylation (covalent attachment of FAD) of the flavoprotein subunit sdha of the SDH catalytic dimer. The chain is Succinate dehydrogenase assembly factor 2, mitochondrial from Danio rerio (Zebrafish).